A 248-amino-acid chain; its full sequence is Ubiquinone/menaquinone biosynthesis C-methyltransferase UbiE (248 aa).

S-adenosyl-L-methionine is bound by residues threonine 71, aspartate 92, and 120-121 (DA).

This sequence belongs to the class I-like SAM-binding methyltransferase superfamily. MenG/UbiE family.

It catalyses the reaction a 2-demethylmenaquinol + S-adenosyl-L-methionine = a menaquinol + S-adenosyl-L-homocysteine + H(+). The catalysed reaction is a 2-methoxy-6-(all-trans-polyprenyl)benzene-1,4-diol + S-adenosyl-L-methionine = a 5-methoxy-2-methyl-3-(all-trans-polyprenyl)benzene-1,4-diol + S-adenosyl-L-homocysteine + H(+). It functions in the pathway quinol/quinone metabolism; menaquinone biosynthesis; menaquinol from 1,4-dihydroxy-2-naphthoate: step 2/2. Its pathway is cofactor biosynthesis; ubiquinone biosynthesis. Methyltransferase required for the conversion of demethylmenaquinol (DMKH2) to menaquinol (MKH2) and the conversion of 2-polyprenyl-6-methoxy-1,4-benzoquinol (DDMQH2) to 2-polyprenyl-3-methyl-6-methoxy-1,4-benzoquinol (DMQH2). The polypeptide is Ubiquinone/menaquinone biosynthesis C-methyltransferase UbiE (Methylococcus capsulatus (strain ATCC 33009 / NCIMB 11132 / Bath)).